Consider the following 224-residue polypeptide: Voltage-dependent calcium channel gamma-1 subunit (224 aa).

At Met-1–Arg-10 the chain is on the cytoplasmic side. The chain crosses the membrane as a helical span at residues Val-11 to Thr-29. Over Asp-30–Ala-110 the chain is Extracellular. N-linked (GlcNAc...) asparagine glycans are attached at residues Asn-43 and Asn-81. A disulfide bridge links Cys-57 with Cys-82. The chain crosses the membrane as a helical span at residues Ala-111–Phe-131. The Cytoplasmic segment spans residues Arg-132 to Asp-136. A helical transmembrane segment spans residues Tyr-137–Val-157. The Extracellular portion of the chain corresponds to Glu-158 to Gly-181. Residues Trp-182–Leu-206 traverse the membrane as a helical segment. Residues Pro-207–His-224 are Cytoplasmic-facing.

Belongs to the PMP-22/EMP/MP20 family. CACNG subfamily. In terms of assembly, component of a calcium channel complex consisting of a pore-forming alpha subunit (CACNA1S) and the ancillary subunits CACNB1 or CACNB2, CACNG1 and CACNA2D1. The channel complex contains alpha, beta, gamma and delta subunits in a 1:1:1:1 ratio, i.e. it contains either CACNB1 or CACNB2. Post-translationally, N-glycosylated.

The protein localises to the cell membrane. Its subcellular location is the sarcolemma. Regulatory subunit of the voltage-gated calcium channel that gives rise to L-type calcium currents in skeletal muscle. Regulates channel inactivation kinetics. This Sus scrofa (Pig) protein is Voltage-dependent calcium channel gamma-1 subunit (CACNG1).